A 360-amino-acid chain; its full sequence is Nucleoporin SEH1-A (360 aa).

6 WD repeats span residues 10–49 (DHKD…NWHC), 55–96 (THSG…SNDK), 111–152 (DSRT…NLSQ), 160–210 (SCKL…RKYA), 217–258 (SVSD…KELS), and 276–315 (NHNS…NWKC).

The protein belongs to the WD repeat SEC13 family. In terms of assembly, component of the Nup107-160 subcomplex of the nuclear pore complex (NPC). The Nup107-160 subcomplex includes NUP160, NUP133, NUP107, NUP98, NUP85, NUP43, NUP37, SEH1 and SEC13. Component of the GATOR2 subcomplex, composed of MIOS, SEC13, SEH1L, WDR24 and WDR59. The GATOR2 complex interacts with CASTOR1 and CASTOR2; the interaction is negatively regulated by arginine. The GATOR2 complex interacts with SESN1, SESN2 and SESN3; the interaction is negatively regulated by amino acids.

It localises to the chromosome. Its subcellular location is the centromere. The protein localises to the kinetochore. The protein resides in the nucleus. It is found in the nuclear pore complex. It localises to the lysosome membrane. Its activity is regulated as follows. The GATOR2 complex is negatively regulated by the upstream amino acid sensors CASTOR1 and SESN2, which sequester the GATOR2 complex in absence of amino acids. In the presence of abundant amino acids, GATOR2 is released from CASTOR1 and SESN2 and activated. In terms of biological role, component of the Nup107-160 subcomplex of the nuclear pore complex (NPC). The Nup107-160 subcomplex is required for the assembly of a functional NPC. The Nup107-160 subcomplex is also required for normal kinetochore microtubule attachment, mitotic progression and chromosome segregation. This subunit plays a role in recruitment of the Nup107-160 subcomplex to the kinetochore. Its function is as follows. As a component of the GATOR2 complex, functions as an activator of the amino acid-sensing branch of the mTORC1 signaling pathway. The GATOR2 complex indirectly activates mTORC1 through the inhibition of the GATOR1 subcomplex. GATOR2 probably acts as an E3 ubiquitin-protein ligase toward GATOR1. In the presence of abundant amino acids, the GATOR2 complex mediates ubiquitination of the NPRL2 core component of the GATOR1 complex, leading to GATOR1 inactivation. In the absence of amino acids, GATOR2 is inhibited, activating the GATOR1 complex. This chain is Nucleoporin SEH1-A (seh1l-a), found in Xenopus laevis (African clawed frog).